The primary structure comprises 20 residues: Succinate--CoA ligase [ADP-forming] subunit beta, mitochondrial (20 aa).

In terms of domain architecture, ATP-grasp spans 8-20 (SMELLQEAGVSIP).

Belongs to the succinate/malate CoA ligase beta subunit family. ATP-specific subunit beta subfamily. In terms of assembly, heterodimer of an alpha and a beta subunit. The beta subunit determines specificity for ATP. Interacts with ALAS2.

Its subcellular location is the mitochondrion. The enzyme catalyses succinate + ATP + CoA = succinyl-CoA + ADP + phosphate. It functions in the pathway carbohydrate metabolism; tricarboxylic acid cycle; succinate from succinyl-CoA (ligase route): step 1/1. ATP-specific succinyl-CoA synthetase functions in the citric acid cycle (TCA), coupling the hydrolysis of succinyl-CoA to the synthesis of ATP and thus represents the only step of substrate-level phosphorylation in the TCA. The beta subunit provides nucleotide specificity of the enzyme and binds the substrate succinate, while the binding sites for coenzyme A and phosphate are found in the alpha subunit. This Canis lupus familiaris (Dog) protein is Succinate--CoA ligase [ADP-forming] subunit beta, mitochondrial.